Consider the following 127-residue polypeptide: Fatty acid-binding protein, liver (127 aa).

An N-acetylmethionine modification is found at Met-1. Lys-31 and Lys-36 each carry N6-succinyllysine. Position 39 is a phosphoserine (Ser-39). At Lys-46 the chain carries N6-succinyllysine. Ser-56 carries the phosphoserine modification. 3 positions are modified to N6-succinyllysine: Lys-57, Lys-78, and Lys-90. Ser-100 is subject to Phosphoserine. Deamidated asparagine; alternate is present on Asn-105. Positions 105–106 (NG) form a cross-link, isoaspartyl glycine isopeptide (Asn-Gly); alternate. At Lys-121 the chain carries N6-succinyllysine.

It belongs to the calycin superfamily. Fatty-acid binding protein (FABP) family. As to quaternary structure, monomer. Deamidation and transpeptidation at the beta carboxyl of Asn-105 forms an isoaspartyl residue and Edman degradation appears as though blocked. This rearrangement gives rise to an extra negative charge carried by the acid form.

It is found in the cytoplasm. In terms of biological role, plays a role in lipoprotein-mediated cholesterol uptake in hepatocytes. Binds cholesterol. Binds free fatty acids and their coenzyme A derivatives, bilirubin, and some other small molecules in the cytoplasm. May be involved in intracellular lipid transport. In Bos taurus (Bovine), this protein is Fatty acid-binding protein, liver (FABP1).